Reading from the N-terminus, the 126-residue chain is Holo-[acyl-carrier-protein] synthase (126 aa).

Mg(2+) contacts are provided by D9 and E58.

Belongs to the P-Pant transferase superfamily. AcpS family. It depends on Mg(2+) as a cofactor.

Its subcellular location is the cytoplasm. It catalyses the reaction apo-[ACP] + CoA = holo-[ACP] + adenosine 3',5'-bisphosphate + H(+). Transfers the 4'-phosphopantetheine moiety from coenzyme A to a Ser of acyl-carrier-protein. The chain is Holo-[acyl-carrier-protein] synthase from Vibrio parahaemolyticus serotype O3:K6 (strain RIMD 2210633).